We begin with the raw amino-acid sequence, 90 residues long: CRISPR-associated endonuclease Cas2 2 (90 aa).

Aspartate 11 serves as a coordination point for Mg(2+).

It belongs to the CRISPR-associated endoribonuclease Cas2 protein family. Homodimer, forms a heterotetramer with a Cas1 homodimer. Requires Mn(2+) as cofactor. The cofactor is Mg(2+).

With respect to regulation, inhibited by EDTA and at pH 6.0. CRISPR (clustered regularly interspaced short palindromic repeat), is an adaptive immune system that provides protection against mobile genetic elements (viruses, transposable elements and conjugative plasmids). CRISPR clusters contain sequences complementary to antecedent mobile elements and target invading nucleic acids. CRISPR clusters are transcribed and processed into CRISPR RNA (crRNA). Involved in the integration of spacer DNA into the CRISPR cassette. Functions as a dsDNA endonuclease and as a weak ssRNase. This Thermus thermophilus (strain ATCC BAA-163 / DSM 7039 / HB27) protein is CRISPR-associated endonuclease Cas2 2 (cas2b).